The chain runs to 400 residues: Phosphoglycerate kinase (400 aa).

Residues 21–23 (DFN), R37, 60–63 (HLGR), R121, and R154 each bind substrate. Residues K204, E326, and 355-358 (GGDS) each bind ATP.

It belongs to the phosphoglycerate kinase family. As to quaternary structure, monomer.

The protein localises to the cytoplasm. It catalyses the reaction (2R)-3-phosphoglycerate + ATP = (2R)-3-phospho-glyceroyl phosphate + ADP. It functions in the pathway carbohydrate degradation; glycolysis; pyruvate from D-glyceraldehyde 3-phosphate: step 2/5. This chain is Phosphoglycerate kinase, found in Chloroflexus aurantiacus (strain ATCC 29366 / DSM 635 / J-10-fl).